The sequence spans 152 residues: MSQLCPCGSALEYSSCCQRYLSGAELAPGPSQLMRSRYSAFVMKDADYLIKTWHPSCQAQTFRAELEKGFSQTEWLGLTLFASDERRVPNEGFASFVARFNDNNRPGAIIERSRFLKENGQWYYIDGTRPLIGRNDPCPCGSGKKFKKCCGQ.

The protein belongs to the UPF0225 family.

The polypeptide is UPF0225 protein KPK_2103 (Klebsiella pneumoniae (strain 342)).